We begin with the raw amino-acid sequence, 504 residues long: Maturase K (504 aa).

The protein belongs to the intron maturase 2 family. MatK subfamily.

The protein localises to the plastid. Its subcellular location is the chloroplast. Usually encoded in the trnK tRNA gene intron. Probably assists in splicing its own and other chloroplast group II introns. The polypeptide is Maturase K (Cucumis sativus (Cucumber)).